Consider the following 205-residue polypeptide: Holliday junction branch migration complex subunit RuvA (205 aa).

The segment at 1–64 (MIGKLKGTID…EDQLKLFGFL (64 aa)) is domain I. The tract at residues 65-143 (SALEREWFRL…AFVGEMAPSI (79 aa)) is domain II. The interval 144-153 (GLKQELGEGV) is flexible linker. Positions 153-205 (VAAAPVSDAVSALTNLGYSRDQAANAVAAALKNGGEGADSARLIRLGLKELSR) are domain III.

The protein belongs to the RuvA family. Homotetramer. Forms an RuvA(8)-RuvB(12)-Holliday junction (HJ) complex. HJ DNA is sandwiched between 2 RuvA tetramers; dsDNA enters through RuvA and exits via RuvB. An RuvB hexamer assembles on each DNA strand where it exits the tetramer. Each RuvB hexamer is contacted by two RuvA subunits (via domain III) on 2 adjacent RuvB subunits; this complex drives branch migration. In the full resolvosome a probable DNA-RuvA(4)-RuvB(12)-RuvC(2) complex forms which resolves the HJ.

It localises to the cytoplasm. Its function is as follows. The RuvA-RuvB-RuvC complex processes Holliday junction (HJ) DNA during genetic recombination and DNA repair, while the RuvA-RuvB complex plays an important role in the rescue of blocked DNA replication forks via replication fork reversal (RFR). RuvA specifically binds to HJ cruciform DNA, conferring on it an open structure. The RuvB hexamer acts as an ATP-dependent pump, pulling dsDNA into and through the RuvAB complex. HJ branch migration allows RuvC to scan DNA until it finds its consensus sequence, where it cleaves and resolves the cruciform DNA. In Sinorhizobium medicae (strain WSM419) (Ensifer medicae), this protein is Holliday junction branch migration complex subunit RuvA.